Reading from the N-terminus, the 127-residue chain is Cytochrome c' (127 aa).

Gln-1 carries the post-translational modification Pyrrolidone carboxylic acid. Heme c-binding residues include Arg-12, Gln-13, Asp-67, Cys-116, Cys-119, and His-120.

In terms of assembly, homodimer. Post-translationally, binds 1 heme c group covalently per subunit.

It is found in the periplasm. Its function is as follows. Cytochrome c' is the most widely occurring bacterial c-type cytochrome. Cytochromes c' are high-spin proteins and the heme has no sixth ligand. Their exact function is not known. This Alcaligenes xylosoxydans xylosoxydans (Achromobacter xylosoxidans) protein is Cytochrome c'.